The primary structure comprises 160 residues: SsrA-binding protein (160 aa).

It belongs to the SmpB family.

It is found in the cytoplasm. In terms of biological role, required for rescue of stalled ribosomes mediated by trans-translation. Binds to transfer-messenger RNA (tmRNA), required for stable association of tmRNA with ribosomes. tmRNA and SmpB together mimic tRNA shape, replacing the anticodon stem-loop with SmpB. tmRNA is encoded by the ssrA gene; the 2 termini fold to resemble tRNA(Ala) and it encodes a 'tag peptide', a short internal open reading frame. During trans-translation Ala-aminoacylated tmRNA acts like a tRNA, entering the A-site of stalled ribosomes, displacing the stalled mRNA. The ribosome then switches to translate the ORF on the tmRNA; the nascent peptide is terminated with the 'tag peptide' encoded by the tmRNA and targeted for degradation. The ribosome is freed to recommence translation, which seems to be the essential function of trans-translation. The polypeptide is SsrA-binding protein (Dinoroseobacter shibae (strain DSM 16493 / NCIMB 14021 / DFL 12)).